The following is a 272-amino-acid chain: Protein FAM210A (272 aa).

A DUF1279 domain is found at 117-229 (DKSISLYQRF…GYMSTPPPVK (113 aa)). A helical transmembrane segment spans residues 136-156 (VLIPVHLITSGVWFGTFYYAA). The stretch at 229 to 271 (KEYLQDRMEETKELITEKMEETKDRLTEKLQETKEKVSFKKKV) forms a coiled coil. The tract at residues 246–272 (KMEETKDRLTEKLQETKEKVSFKKKVE) is disordered.

This sequence belongs to the FAM210 family. As to quaternary structure, interacts with ATAD3A.

It localises to the membrane. Its subcellular location is the mitochondrion. The protein localises to the cytoplasm. May play a role in the structure and strength of both muscle and bone. This Homo sapiens (Human) protein is Protein FAM210A (FAM210A).